A 107-amino-acid chain; its full sequence is Ferredoxin 1 (107 aa).

4Fe-4S ferredoxin-type domains lie at 2–30 and 31–60; these read TFVVTDNCIKCKYTDCVEVCPVDCFYEGP and NFLVIHPDECIDCALCEPECPAQAIFSEDE. The [3Fe-4S] cluster site is built by Cys-9 and Cys-17. 4 residues coordinate [4Fe-4S] cluster: Cys-21, Cys-40, Cys-43, and Cys-46. Cys-50 lines the [3Fe-4S] cluster pocket.

Requires [4Fe-4S] cluster as cofactor. It depends on [3Fe-4S] cluster as a cofactor.

Functionally, ferredoxins are iron-sulfur proteins that transfer electrons in a wide variety of metabolic reactions. The sequence is that of Ferredoxin 1 (fdxA) from Pseudomonas putida (strain ATCC 47054 / DSM 6125 / CFBP 8728 / NCIMB 11950 / KT2440).